The primary structure comprises 363 residues: Homeobox protein DTH-2 (363 aa).

The segment at residues 133–192 (RRKRRILFSQAQIYELERRFKQQKYLSAPEREHLANLINLTPTQVKIWFQNHRYKCKRSQ) is a DNA-binding region (homeobox). The interval 189 to 246 (KRSQKDKEKEQQKEKSYHLKKNIVDDKERSPNKQICNASSSDRSTPEEPVAKAKESGL) is disordered. Positions 191–219 (SQKDKEKEQQKEKSYHLKKNIVDDKERSP) are enriched in basic and acidic residues. Positions 220-231 (NKQICNASSSDR) are enriched in polar residues. Residues 232-246 (STPEEPVAKAKESGL) show a composition bias toward basic and acidic residues.

Belongs to the NK-2 homeobox family. Intestine and unidentified peripheral parenchymal cells. Slightly higher levels in the cephalic region compared to other body regions.

The protein localises to the nucleus. Its function is as follows. This protein might be involved in determination and/or differentiation of nerve cells in the continuous replacement of neurons in the cephalic region. This chain is Homeobox protein DTH-2 (DTH-2), found in Girardia tigrina (Planarian).